A 353-amino-acid polypeptide reads, in one-letter code: Replication factor C subunit 2 (353 aa).

At methionine 1 the chain carries N-acetylmethionine. Residues valine 28, arginine 32, 65 to 73 (GPPGTGKTS), asparagine 171, and arginine 229 each bind ATP.

It belongs to the activator 1 small subunits family. Replication factor C (RFC) is a heteropentamer of subunits RFC1, RFC2, RFC3, RFC4 and RFC5 and forms a complex with POL30/PCNA in the presence of ATP. Component of the RAD24-RFC complex which consists of RAD14, RFC2, RFC3, RFC4 and RFC5 and associates with the checkpoint clamp DDC1:MEC3:RAD17 complex. Component of the ELG1-RFC complex which consists of ELG1, RFC2, RFC3, RFC4 and RFC5. Component of the CTF18-RFC complex, which consists of CTF18, CTF8, DCC1, RFC2, RFC3, RFC4 and RFC5. RFC2 interacts with ECO1.

It localises to the nucleus. In terms of biological role, component of ATP-dependent clamp loader (RFC and RFC-like) complexes for DNA clamps, such as the POL30/PCNA homotrimer and the checkpoint clamp DDC1:MEC3:RAD17 complex. During a clamp loading circle, the RFC:clamp complex binds to DNA and the recognition of the double-stranded/single-stranded junction stimulates ATP hydrolysis by RFC. The complex presumably provides bipartite ATP sites in which one subunit supplies a catalytic site for hydrolysis of ATP bound to the neighboring subunit. Dissociation of RFC from the clamp leaves the clamp encircling DNA. Component of the replication factor C (RFC or activator 1) complex which loads POL30/PCNA and acts during elongation of primed DNA templates by DNA polymerase delta and epsilon. RFC has an essential but redundant activity in sister chromatid cohesion establishment. Component of the RFC-like complex CTF18-RFC which is required for efficient establishment of chromosome cohesion during S-phase and may load or unload POL30/PCNA. Component of the RFC-like RAD24-RFC complex which loads the checkpoint clamp DDC1:MEC3:RAD17 complex and is involved in DNA repair pathways. Component of the RFC-like ELG1-RFC complex which appears to have a role in DNA replication, replication fork re-start, recombination and repair. RFC2 binds ATP and single-stranded DNA. The protein is Replication factor C subunit 2 (RFC2) of Saccharomyces cerevisiae (strain ATCC 204508 / S288c) (Baker's yeast).